The primary structure comprises 457 residues: tRNA-2-methylthio-N(6)-dimethylallyladenosine synthase (457 aa).

One can recognise an MTTase N-terminal domain in the interval 3-120 (KKVYVKTFGC…LPQMIDKRRE (118 aa)). [4Fe-4S] cluster is bound by residues Cys12, Cys49, Cys83, Cys157, Cys161, and Cys164. Residues 143–377 (RVDGPSAFVS…QATIEENVQR (235 aa)) form the Radical SAM core domain. In terms of domain architecture, TRAM spans 380–447 (DSMVGKIERI…PHSLRGELVL (68 aa)).

The protein belongs to the methylthiotransferase family. MiaB subfamily. In terms of assembly, monomer. Requires [4Fe-4S] cluster as cofactor.

The protein resides in the cytoplasm. The catalysed reaction is N(6)-dimethylallyladenosine(37) in tRNA + (sulfur carrier)-SH + AH2 + 2 S-adenosyl-L-methionine = 2-methylsulfanyl-N(6)-dimethylallyladenosine(37) in tRNA + (sulfur carrier)-H + 5'-deoxyadenosine + L-methionine + A + S-adenosyl-L-homocysteine + 2 H(+). In terms of biological role, catalyzes the methylthiolation of N6-(dimethylallyl)adenosine (i(6)A), leading to the formation of 2-methylthio-N6-(dimethylallyl)adenosine (ms(2)i(6)A) at position 37 in tRNAs that read codons beginning with uridine. The protein is tRNA-2-methylthio-N(6)-dimethylallyladenosine synthase of Paraburkholderia phytofirmans (strain DSM 17436 / LMG 22146 / PsJN) (Burkholderia phytofirmans).